The sequence spans 348 residues: Mannonate dehydratase (348 aa).

Belongs to the mannonate dehydratase family. Fe(2+) is required as a cofactor. Mn(2+) serves as cofactor.

The enzyme catalyses D-mannonate = 2-dehydro-3-deoxy-D-gluconate + H2O. It participates in carbohydrate metabolism; pentose and glucuronate interconversion. Functionally, catalyzes the dehydration of D-mannonate. This Streptococcus uberis (strain ATCC BAA-854 / 0140J) protein is Mannonate dehydratase.